We begin with the raw amino-acid sequence, 941 residues long: Cell wall protein IFF9 (941 aa).

A signal peptide spans 1–20; sequence MQLFQNILVSIALLTQIVFA. The GPI-anchor amidated asparagine moiety is linked to residue asparagine 917. Positions 918-941 are cleaved as a propeptide — removed in mature form; it reads GSNKESIENIKYLALVVFGLMMFM.

This sequence belongs to the HYR1/IFF family. Post-translationally, the GPI-anchor is attached to the protein in the endoplasmic reticulum and serves to target the protein to the cell surface. There, the glucosamine-inositol phospholipid moiety is cleaved off and the GPI-modified mannoprotein is covalently attached via its lipidless GPI glycan remnant to the 1,6-beta-glucan of the outer cell wall layer.

Its subcellular location is the secreted. It is found in the cell wall. The protein resides in the membrane. Functionally, GPI-anchored cell wall protein involved in cell wall organization, hyphal growth, as well as in host-fungal interaction and virulence. This Candida albicans (strain SC5314 / ATCC MYA-2876) (Yeast) protein is Cell wall protein IFF9 (IFF9).